Here is a 133-residue protein sequence, read N- to C-terminus: Small ribosomal subunit protein uS11 (133 aa).

The tract at residues methionine 1 to leucine 22 is disordered. Residues glycine 7–lysine 17 are compositionally biased toward basic residues.

It belongs to the universal ribosomal protein uS11 family. Part of the 30S ribosomal subunit. Interacts with proteins S7 and S18. Binds to IF-3.

Located on the platform of the 30S subunit, it bridges several disparate RNA helices of the 16S rRNA. Forms part of the Shine-Dalgarno cleft in the 70S ribosome. This chain is Small ribosomal subunit protein uS11, found in Renibacterium salmoninarum (strain ATCC 33209 / DSM 20767 / JCM 11484 / NBRC 15589 / NCIMB 2235).